An 89-amino-acid polypeptide reads, in one-letter code: Small ribosomal subunit protein uS15 (89 aa).

It belongs to the universal ribosomal protein uS15 family. As to quaternary structure, part of the 30S ribosomal subunit. Forms a bridge to the 50S subunit in the 70S ribosome, contacting the 23S rRNA.

Functionally, one of the primary rRNA binding proteins, it binds directly to 16S rRNA where it helps nucleate assembly of the platform of the 30S subunit by binding and bridging several RNA helices of the 16S rRNA. In terms of biological role, forms an intersubunit bridge (bridge B4) with the 23S rRNA of the 50S subunit in the ribosome. This Shewanella putrefaciens (strain CN-32 / ATCC BAA-453) protein is Small ribosomal subunit protein uS15.